The sequence spans 127 residues: Mating pheromone 4 (127 aa).

The signal sequence occupies residues Met1–Ala16. Positions Phe17 to Lys42 are excised as a propeptide.

The protein resides in the secreted. Mating ciliate pheromones (or gamones) are diffusible extracellular communication signals that distinguish different intraspecific classes of cells commonly referred to as 'mating types'. They prepare the latter for conjugation by changing their cell surface properties. The polypeptide is Mating pheromone 4 (PHR4) (Euplotoides octocarinatus (Freshwater ciliate)).